The primary structure comprises 466 residues: MQATALSSGFNPLTKRKDHRFPRSCSQRNSLSLIQCDIKERSFGESMTITNRGLSFKTNVFEQARSVTGDCSYDETSAKARSHVVAEDKIGVLLLNLGGPETLNDVQPFLYNLFADPDIIRLPRPFQFLQGTIAKFISVVRAPKSKEGYAAIGGGSPLRKITDEQADAIKMSLQAKNIAANVYVGMRYWYPFTEEAVQQIKKDKITRLVVLPLYPQYSISTTGSSIRVLQDLFRKDPYLAGVPVAIIKSWYQRRGYVNSMADLIEKELQTFSDPKEVMIFFSAHGVPVSYVENAGDPYQKQMEECIDLIMEELKARGVLNDHKLAYQSRVGPVQWLKPYTDEVLVDLGKSGVKSLLAVPVSFVSEHIETLEEIDMEYRELALESGVENWGRVPALGLTPSFITDLADAVIESLPSAEAMSNPNAVVDSEDSESSDAFSYIVKMFFGSILAFVLLLSPKMFHAFRNL.

Positions Met-1 to Asn-11 are enriched in polar residues. The tract at residues Met-1–Arg-23 is disordered. The N-terminal 35 residues, Met-1 to Gln-35, are a transit peptide targeting the chloroplast and mitochondrion.

The protein belongs to the ferrochelatase family. Expressed in roots, leaves, stems and flowers. Present in both leaves and roots.

The protein localises to the plastid. Its subcellular location is the chloroplast membrane. It localises to the chloroplast thylakoid membrane. It is found in the mitochondrion. The catalysed reaction is heme b + 2 H(+) = protoporphyrin IX + Fe(2+). It participates in porphyrin-containing compound metabolism; protoheme biosynthesis; protoheme from protoporphyrin-IX: step 1/1. Catalyzes the last step of heme biosynthesis by inserting ferrous iron into protoporphyrin IX to produce protoheme. Produces heme for photosynthetic cytochromes, but does not seem to be involved in stress responses. May be involved in wound-induced supply of heme to defensive hemoproteins outside plastids. Regulates the expression of photosynthesis-associated nuclear genes in undeveloped chloroplasts through production of heme. This is Ferrochelatase-1, chloroplastic/mitochondrial from Arabidopsis thaliana (Mouse-ear cress).